Reading from the N-terminus, the 273-residue chain is Large ribosomal subunit protein uL2cz/uL2cy (273 aa).

2 disordered regions span residues 1 to 25 and 224 to 273; these read MAIH…VKSN and NPVD…RRRK.

Belongs to the universal ribosomal protein uL2 family. In terms of assembly, part of the 50S ribosomal subunit.

The protein localises to the plastid. It localises to the chloroplast. The chain is Large ribosomal subunit protein uL2cz/uL2cy (rpl2-A) from Phalaenopsis aphrodite subsp. formosana (Moth orchid).